A 256-amino-acid chain; its full sequence is 1-(5-phosphoribosyl)-5-[(5-phosphoribosylamino)methylideneamino] imidazole-4-carboxamide isomerase (256 aa).

Aspartate 9 (proton acceptor) is an active-site residue. Catalysis depends on aspartate 130, which acts as the Proton donor.

It belongs to the HisA/HisF family.

Its subcellular location is the cytoplasm. The enzyme catalyses 1-(5-phospho-beta-D-ribosyl)-5-[(5-phospho-beta-D-ribosylamino)methylideneamino]imidazole-4-carboxamide = 5-[(5-phospho-1-deoxy-D-ribulos-1-ylimino)methylamino]-1-(5-phospho-beta-D-ribosyl)imidazole-4-carboxamide. It functions in the pathway amino-acid biosynthesis; L-histidine biosynthesis; L-histidine from 5-phospho-alpha-D-ribose 1-diphosphate: step 4/9. The sequence is that of 1-(5-phosphoribosyl)-5-[(5-phosphoribosylamino)methylideneamino] imidazole-4-carboxamide isomerase from Prochlorococcus marinus (strain SARG / CCMP1375 / SS120).